The primary structure comprises 115 residues: Thioredoxin-1 (115 aa).

The Thioredoxin domain occupies 2 to 114; the sequence is LKRCNFKNQV…RQKVLEHVSA (113 aa). Residues cysteine 39 and cysteine 42 each act as nucleophile in the active site. Cysteines 39 and 42 form a disulfide.

It belongs to the thioredoxin family. In terms of tissue distribution, expressed in ASJ and ASI ciliated sensory neurons. Expressed in the intestine (at protein level).

In terms of biological role, participates in various redox reactions through the reversible oxidation of its active center dithiol to a disulfide and catalyzes dithiol-disulfide exchange reactions. Shown to facilitate the reduction of insulin disulfide bonds. Might play a role in the reversible nitrosylation of cysteine residues in target proteins, and thereby contributing to the response to intracellular nitric oxide. Shapes the ASJ sensory neuron biphasic response to nitric oxide (NO) exposure; trans-nitrosylation activity might inhibit calcium flux to the cytoplasm in ASJ neurons when exposed to a NO stimulus, whereas de-nitrosylation activity might promote calcium flux when NO is diminished. By regulating the NO-induced ASJ sensory neuron activity, mediates the avoidance response to NO-producing organisms like P.aeruginosa. Positively regulates life span extension under normal and caloric restriction conditions, dauer formation and the oxidative stress response. Contributes to the down-regulation of expression of the insulin-like neuropeptide daf-28 in the ASJ neurons in a redox-independent fashion, thereby promoting dauer formation. Negatively regulates the nuclear localization of the intestinal skn-1 transcription factor in a p38 MAPK pathway-dependent and redox-independent fashion. The protein is Thioredoxin-1 (trx-1) of Caenorhabditis elegans.